The primary structure comprises 93 residues: uncharacterized protein (93 aa).

A helical membrane pass occupies residues 12-32 (VVGGLSFWTFSAGLIMIVNAL). The disordered stretch occupies residues 47 to 66 (TANANGSDDDNENKNNSYRS).

Its subcellular location is the cell membrane. This is an uncharacterized protein from Mycoplasma genitalium (strain ATCC 33530 / DSM 19775 / NCTC 10195 / G37) (Mycoplasmoides genitalium).